The primary structure comprises 513 residues: Varicidin biosynthesis cluster-specific transcription factor (513 aa).

The segment at residues 16–54 (CERCRLHKLKCTILPQKRFEGPQEAPEQCTRCARAKAKC) is a DNA-binding region (zn(2)-C6 fungal-type). Disordered stretches follow at residues 58 to 92 (RRAP…MQPN) and 97 to 116 (VSSH…SSLK). Positions 67 to 76 (SSSNDRSSVS) are enriched in low complexity. A compositionally biased stretch (polar residues) spans 77 to 92 (KGINSTTPATRTMQPN).

It is found in the nucleus. In terms of biological role, transcription factor that regulates the expression of the gene cluster that mediates the biosynthesis of varicidin A, an antifungal natural product containing a cis-octahydrodecalin core. This is Varicidin biosynthesis cluster-specific transcription factor from Talaromyces variabilis (Penicillium variabile).